A 741-amino-acid chain; its full sequence is Ion-translocating oxidoreductase complex subunit C (741 aa).

4Fe-4S ferredoxin-type domains lie at 369 to 397 (GEPQ…QQLY) and 407 to 436 (KATT…VQYF). Positions 377, 380, 383, 387, 416, 419, 422, and 426 each coordinate [4Fe-4S] cluster. The interval 627-654 (IARAKARKLEQQQQANAEPEEQVDPRKA) is disordered.

Belongs to the 4Fe4S bacterial-type ferredoxin family. RnfC subfamily. In terms of assembly, the complex is composed of six subunits: RsxA, RsxB, RsxC, RsxD, RsxE and RsxG. It depends on [4Fe-4S] cluster as a cofactor.

It is found in the cell inner membrane. Functionally, part of a membrane-bound complex that couples electron transfer with translocation of ions across the membrane. Required to maintain the reduced state of SoxR. In Escherichia coli O127:H6 (strain E2348/69 / EPEC), this protein is Ion-translocating oxidoreductase complex subunit C.